Reading from the N-terminus, the 341-residue chain is Probable long-chain-alcohol O-fatty-acyltransferase 1 (341 aa).

The next 8 membrane-spanning stretches (helical) occupy residues 7-27 (NLIE…YISS), 36-56 (LLSI…LSCV), 58-78 (FCAI…LLFA), 120-140 (PMPK…LHVY), 149-169 (FVVL…VLVF), 233-253 (MFAG…LLYF), 261-281 (TWEV…EIAV), and 293-313 (AVSG…LFLA).

Belongs to the wax synthase family.

Its subcellular location is the membrane. It carries out the reaction a long chain fatty alcohol + a fatty acyl-CoA = a wax ester + CoA. Functionally, catalyzes the final step in the synthesis of long-chain linear esters (waxes). In Arabidopsis thaliana (Mouse-ear cress), this protein is Probable long-chain-alcohol O-fatty-acyltransferase 1 (AT1).